The primary structure comprises 138 residues: Large ribosomal subunit protein bL19 (138 aa).

This sequence belongs to the bacterial ribosomal protein bL19 family.

In terms of biological role, this protein is located at the 30S-50S ribosomal subunit interface and may play a role in the structure and function of the aminoacyl-tRNA binding site. This Rickettsia akari (strain Hartford) protein is Large ribosomal subunit protein bL19.